The sequence spans 464 residues: 3-isopropylmalate dehydratase large subunit (464 aa).

The [4Fe-4S] cluster site is built by cysteine 337, cysteine 397, and cysteine 400.

The protein belongs to the aconitase/IPM isomerase family. LeuC type 1 subfamily. Heterodimer of LeuC and LeuD. It depends on [4Fe-4S] cluster as a cofactor.

The enzyme catalyses (2R,3S)-3-isopropylmalate = (2S)-2-isopropylmalate. It participates in amino-acid biosynthesis; L-leucine biosynthesis; L-leucine from 3-methyl-2-oxobutanoate: step 2/4. In terms of biological role, catalyzes the isomerization between 2-isopropylmalate and 3-isopropylmalate, via the formation of 2-isopropylmaleate. The chain is 3-isopropylmalate dehydratase large subunit from Bacillus cereus (strain 03BB102).